Here is a 662-residue protein sequence, read N- to C-terminus: Histidine decarboxylase (662 aa).

The substrate site is built by Tyr-88 and His-201. N6-(pyridoxal phosphate)lysine is present on Lys-312. The disordered stretch occupies residues Gln-489–Asp-518.

The protein belongs to the group II decarboxylase family. Homodimer. It depends on pyridoxal 5'-phosphate as a cofactor.

It carries out the reaction L-histidine + H(+) = histamine + CO2. It participates in amine and polyamine biosynthesis; histamine biosynthesis; histamine from L-histidine: step 1/1. Catalyzes the biosynthesis of histamine from histidine. The polypeptide is Histidine decarboxylase (Hdc) (Mus musculus (Mouse)).